Reading from the N-terminus, the 702-residue chain is Cell adhesion molecule CEACAM5 (702 aa).

The signal sequence occupies residues 1–34 (MESPSAPPHRWCIPWQRLLLTASLLTFWNPPTTA). The Ig-like V-type domain occupies 35-144 (KLTIESTPFN…TGQFRVYPEL (110 aa)). 28 N-linked (GlcNAc...) asparagine glycosylation sites follow: Asn-104, Asn-115, Asn-152, Asn-182, Asn-197, Asn-204, Asn-208, Asn-246, Asn-256, Asn-274, Asn-288, Asn-292, Asn-309, Asn-330, Asn-351, Asn-360, Asn-375, Asn-432, Asn-466, Asn-480, Asn-508, Asn-529, Asn-553, Asn-560, Asn-580, Asn-612, Asn-650, and Asn-665. Ig-like C2-type domains follow at residues 145-232 (PKPS…VILN), 240-315 (PTIS…TVTT), 323-410 (PKPF…VILN), 418-495 (PTIS…KTIT), 501-588 (PKPS…VTLD), and 593-675 (PDTP…ITVS). A disulfide bridge connects residues Cys-167 and Cys-215. Cys-259 and Cys-299 are disulfide-bonded. Cys-345 and Cys-393 are oxidised to a cystine. Residues Cys-437 and Cys-477 are joined by a disulfide bond. A disulfide bridge links Cys-523 with Cys-571. An intrachain disulfide couples Cys-615 to Cys-655. Residue Ala-685 is the site of GPI-anchor amidated alanine attachment. The propeptide at 686–702 (GATVGIMIGVLVGVALI) is removed in mature form.

This sequence belongs to the immunoglobulin superfamily. CEA family. In terms of assembly, homodimer. Complex immunoreactive glycoprotein with a MW of 180 kDa comprising 60% carbohydrate. As to expression, expressed in columnar epithelial and goblet cells of the colon (at protein level). Found in adenocarcinomas of endodermally derived digestive system epithelium and fetal colon.

The protein resides in the cell membrane. The protein localises to the apical cell membrane. Its subcellular location is the cell surface. Its function is as follows. Cell surface glycoprotein that plays a role in cell adhesion, intracellular signaling and tumor progression. Mediates homophilic and heterophilic cell adhesion with other carcinoembryonic antigen-related cell adhesion molecules, such as CEACAM6. Plays a role as an oncogene by promoting tumor progression; induces resistance to anoikis of colorectal carcinoma cells. In terms of biological role, (Microbial infection) Receptor for E.coli Dr adhesins. Binding of E.coli Dr adhesins leads to dissociation of the homodimer. In Homo sapiens (Human), this protein is Cell adhesion molecule CEACAM5.